The primary structure comprises 364 residues: Cobalt-precorrin-5B C(1)-methyltransferase (364 aa).

The protein belongs to the CbiD family.

It catalyses the reaction Co-precorrin-5B + S-adenosyl-L-methionine = Co-precorrin-6A + S-adenosyl-L-homocysteine. The protein operates within cofactor biosynthesis; adenosylcobalamin biosynthesis; cob(II)yrinate a,c-diamide from sirohydrochlorin (anaerobic route): step 6/10. Its function is as follows. Catalyzes the methylation of C-1 in cobalt-precorrin-5B to form cobalt-precorrin-6A. The protein is Cobalt-precorrin-5B C(1)-methyltransferase of Pseudomonas putida (strain ATCC 700007 / DSM 6899 / JCM 31910 / BCRC 17059 / LMG 24140 / F1).